Consider the following 296-residue polypeptide: ATP synthase gamma chain (296 aa).

The segment at 194–216 (IPASAGQAANDNAGSDQPAGDYE) is disordered.

Belongs to the ATPase gamma chain family. F-type ATPases have 2 components, CF(1) - the catalytic core - and CF(0) - the membrane proton channel. CF(1) has five subunits: alpha(3), beta(3), gamma(1), delta(1), epsilon(1). CF(0) has three main subunits: a, b and c.

Its subcellular location is the cell inner membrane. Produces ATP from ADP in the presence of a proton gradient across the membrane. The gamma chain is believed to be important in regulating ATPase activity and the flow of protons through the CF(0) complex. The chain is ATP synthase gamma chain from Acidiphilium cryptum (strain JF-5).